Consider the following 252-residue polypeptide: Probable transcriptional regulatory protein all4276 (252 aa).

The protein belongs to the TACO1 family.

The protein localises to the cytoplasm. The protein is Probable transcriptional regulatory protein all4276 of Nostoc sp. (strain PCC 7120 / SAG 25.82 / UTEX 2576).